A 504-amino-acid polypeptide reads, in one-letter code: O-fucosyltransferase 39 (504 aa).

A helical; Signal-anchor for type II membrane protein membrane pass occupies residues 11-27 (WILSMFFFVVLFCNNVS). Asn-115 carries an N-linked (GlcNAc...) asparagine glycan. 288-290 (HLR) lines the substrate pocket. Asn-359 and Asn-460 each carry an N-linked (GlcNAc...) asparagine glycan.

This sequence belongs to the glycosyltransferase GT106 family.

It is found in the membrane. It functions in the pathway glycan metabolism. The protein is O-fucosyltransferase 39 of Arabidopsis thaliana (Mouse-ear cress).